A 207-amino-acid chain; its full sequence is LexA repressor (207 aa).

Residues 28–48 constitute a DNA-binding region (H-T-H motif); sequence VREIGEAVGLASSSTVHGHLA. Catalysis depends on for autocatalytic cleavage activity residues serine 129 and lysine 167.

Belongs to the peptidase S24 family. Homodimer.

It catalyses the reaction Hydrolysis of Ala-|-Gly bond in repressor LexA.. Its function is as follows. Represses a number of genes involved in the response to DNA damage (SOS response), including recA and lexA. In the presence of single-stranded DNA, RecA interacts with LexA causing an autocatalytic cleavage which disrupts the DNA-binding part of LexA, leading to derepression of the SOS regulon and eventually DNA repair. The sequence is that of LexA repressor from Geobacillus kaustophilus (strain HTA426).